The chain runs to 617 residues: Proline--tRNA ligase (617 aa).

It belongs to the class-II aminoacyl-tRNA synthetase family. ProS type 1 subfamily. Homodimer.

The protein resides in the cytoplasm. The catalysed reaction is tRNA(Pro) + L-proline + ATP = L-prolyl-tRNA(Pro) + AMP + diphosphate. Catalyzes the attachment of proline to tRNA(Pro) in a two-step reaction: proline is first activated by ATP to form Pro-AMP and then transferred to the acceptor end of tRNA(Pro). As ProRS can inadvertently accommodate and process non-cognate amino acids such as alanine and cysteine, to avoid such errors it has two additional distinct editing activities against alanine. One activity is designated as 'pretransfer' editing and involves the tRNA(Pro)-independent hydrolysis of activated Ala-AMP. The other activity is designated 'posttransfer' editing and involves deacylation of mischarged Ala-tRNA(Pro). The misacylated Cys-tRNA(Pro) is not edited by ProRS. The chain is Proline--tRNA ligase from Streptococcus pneumoniae (strain P1031).